Reading from the N-terminus, the 419-residue chain is D-amino acid dehydrogenase (419 aa).

An FAD-binding site is contributed by 3-17; the sequence is VLILGGGVVGVTSAY.

It belongs to the DadA oxidoreductase family. Requires FAD as cofactor.

It catalyses the reaction a D-alpha-amino acid + A + H2O = a 2-oxocarboxylate + AH2 + NH4(+). It participates in amino-acid degradation; D-alanine degradation; NH(3) and pyruvate from D-alanine: step 1/1. Functionally, oxidative deamination of D-amino acids. This chain is D-amino acid dehydrogenase, found in Methylobacterium radiotolerans (strain ATCC 27329 / DSM 1819 / JCM 2831 / NBRC 15690 / NCIMB 10815 / 0-1).